The chain runs to 338 residues: Glycerol-3-phosphate dehydrogenase [NAD(P)+] (338 aa).

3 residues coordinate NADPH: Trp14, Tyr50, and Lys110. Residues Lys110, Gly141, and Ser143 each coordinate sn-glycerol 3-phosphate. Ala145 lines the NADPH pocket. Sn-glycerol 3-phosphate contacts are provided by Lys196, Asp249, Ser259, Arg260, and Asn261. Lys196 functions as the Proton acceptor in the catalytic mechanism. Arg260 is an NADPH binding site. Glu285 contacts NADPH.

Belongs to the NAD-dependent glycerol-3-phosphate dehydrogenase family.

It is found in the cytoplasm. It catalyses the reaction sn-glycerol 3-phosphate + NAD(+) = dihydroxyacetone phosphate + NADH + H(+). It carries out the reaction sn-glycerol 3-phosphate + NADP(+) = dihydroxyacetone phosphate + NADPH + H(+). It functions in the pathway membrane lipid metabolism; glycerophospholipid metabolism. Catalyzes the reduction of the glycolytic intermediate dihydroxyacetone phosphate (DHAP) to sn-glycerol 3-phosphate (G3P), the key precursor for phospholipid synthesis. The polypeptide is Glycerol-3-phosphate dehydrogenase [NAD(P)+] (Malacoplasma penetrans (strain HF-2) (Mycoplasma penetrans)).